The sequence spans 93 residues: Small ribosomal subunit protein uS19 (93 aa).

This sequence belongs to the universal ribosomal protein uS19 family.

Its function is as follows. Protein S19 forms a complex with S13 that binds strongly to the 16S ribosomal RNA. The sequence is that of Small ribosomal subunit protein uS19 from Synechococcus sp. (strain JA-2-3B'a(2-13)) (Cyanobacteria bacterium Yellowstone B-Prime).